The chain runs to 155 residues: Ribonuclease H (155 aa).

In terms of domain architecture, RNase H type-1 spans 5–146; sequence LAEVVEIFTD…ADMLANRGVQ (142 aa). Mg(2+) is bound by residues Asp-14, Glu-52, Asp-74, and Asp-138.

Belongs to the RNase H family. As to quaternary structure, monomer. Mg(2+) serves as cofactor.

The protein localises to the cytoplasm. It carries out the reaction Endonucleolytic cleavage to 5'-phosphomonoester.. Functionally, endonuclease that specifically degrades the RNA of RNA-DNA hybrids. This Nitrosospira multiformis (strain ATCC 25196 / NCIMB 11849 / C 71) protein is Ribonuclease H.